Reading from the N-terminus, the 57-residue chain is Preprotein translocase subunit SecG (57 aa).

Over 1-31 (MAKKKGEGPGLMSSAGLMRYFESEETSIKLD) the chain is Cytoplasmic. Residues 32–53 (PKMVIGAGIASGVAIMALNITF) traverse the membrane as a helical segment. The Extracellular portion of the chain corresponds to 54-57 (GLWP).

This sequence belongs to the SEC61-beta family. In terms of assembly, component of the protein translocase complex. Heterotrimer consisting of alpha (SecY), beta (SecG) and gamma (SecE) subunits. Can form oligomers of the heterotrimer.

Its subcellular location is the cell membrane. In terms of biological role, involved in protein export. The function of the beta subunit is unknown, but it may be involved in stabilization of the trimeric complex. This is Preprotein translocase subunit SecG from Methanothrix thermoacetophila (strain DSM 6194 / JCM 14653 / NBRC 101360 / PT) (Methanosaeta thermophila).